We begin with the raw amino-acid sequence, 547 residues long: uncharacterized protein (547 aa).

The segment at 1-37 is disordered; the sequence is MSAASSAIPKRSDPRLLDQKKSAKSTLPKNTPENGVS. Residues 10–21 show a composition bias toward basic and acidic residues; it reads KRSDPRLLDQKK. A compositionally biased stretch (polar residues) spans 24–37; the sequence is KSTLPKNTPENGVS. C3H1-type zinc fingers lie at residues 41–67 and 68–95; these read NLQH…SHSL and ETER…HALP. The interval 132–176 is disordered; that stretch reads SPSLSSKTMKNPADKANNTTATDVRGNTATSPYFPFSRSPGRHSG. Residues 147–162 show a composition bias toward polar residues; it reads ANNTTATDVRGNTATS. The residue at position 343 (serine 343) is a Phosphoserine. Position 344 is a phosphotyrosine (tyrosine 344). Serine 353, serine 355, serine 483, serine 489, serine 495, and serine 499 each carry phosphoserine. Threonine 502 carries the post-translational modification Phosphothreonine. The span at 526-536 shows a compositional bias: polar residues; that stretch reads VANSSPPWNST. The segment at 526-547 is disordered; it reads VANSSPPWNSTVEEETPFQMDD. Residues 537–547 are compositionally biased toward acidic residues; sequence VEEETPFQMDD.

This is an uncharacterized protein from Schizosaccharomyces pombe (strain 972 / ATCC 24843) (Fission yeast).